We begin with the raw amino-acid sequence, 189 residues long: Small ribosomal subunit protein uS5 (189 aa).

The S5 DRBM domain occupies F20–V83.

The protein belongs to the universal ribosomal protein uS5 family. Part of the 30S ribosomal subunit. Contacts proteins S4 and S8.

Its function is as follows. With S4 and S12 plays an important role in translational accuracy. Functionally, located at the back of the 30S subunit body where it stabilizes the conformation of the head with respect to the body. The polypeptide is Small ribosomal subunit protein uS5 (Beijerinckia indica subsp. indica (strain ATCC 9039 / DSM 1715 / NCIMB 8712)).